We begin with the raw amino-acid sequence, 271 residues long: Protein PXR1 (271 aa).

Residues 25–72 (TSRFGHQFLEKFGWKPGMGLGLYPMNSNTSHIKVSIKDDNVGLGAKLK) form the G-patch domain. The disordered stretch occupies residues 147–239 (SNAKKRKREG…SASNIPDAVN (93 aa)). Over residues 157–168 (DDSEDEDDDDKE) the composition is skewed to acidic residues. A compositionally biased stretch (basic residues) spans 175–203 (KKHKKHKKHKKDKKKDKKDKKEHKKHKKE). The segment covering 204-221 (EKRLKKEKRAEKTKETKK) has biased composition (basic and acidic residues). At serine 230 the chain carries Phosphoserine.

The protein belongs to the PINX1 family. In terms of assembly, interacts with EST2.

It localises to the nucleus. The protein localises to the nucleolus. In terms of biological role, involved in rRNA-processing at A0, A1 and A2 sites through its action in U18 and U24 snoRNA 3'-end final trimming. Negative regulator of telomerase throughX competition for binding to EST2 with TLC1. The chain is Protein PXR1 (PXR1) from Saccharomyces cerevisiae (strain YJM789) (Baker's yeast).